The following is a 681-amino-acid chain: Terpene synthase 6, chloroplastic (681 aa).

Mg(2+) is bound by residues D433, D437, N577, and E585. The DDXXD motif signature appears at 433–437 (DDLFD).

It belongs to the terpene synthase family. The cofactor is Mg(2+). As to expression, expressed in leaves.

The protein localises to the plastid. It localises to the chloroplast. The protein operates within secondary metabolite biosynthesis; terpenoid biosynthesis. Functionally, may be involved in the biosynthesis of ent-kaurene diterpenoids natural products such as oridonin, miltiradiene, eriocalyxin B and nezukol, known to exhibit antitumor, anti-inflammatory and antibacterial activities. In Isodon rubescens (Rabdosia rubescens), this protein is Terpene synthase 6, chloroplastic.